The primary structure comprises 376 residues: Phosphoserine aminotransferase (376 aa).

Arg46 lines the L-glutamate pocket. Pyridoxal 5'-phosphate is bound by residues 80 to 81 (AT), Phe104, Thr150, Asp172, and Gln195. An N6-(pyridoxal phosphate)lysine modification is found at Lys196. Pyridoxal 5'-phosphate is bound at residue 247–248 (NT).

Belongs to the class-V pyridoxal-phosphate-dependent aminotransferase family. SerC subfamily. As to quaternary structure, homodimer. Requires pyridoxal 5'-phosphate as cofactor.

The protein localises to the cytoplasm. It carries out the reaction O-phospho-L-serine + 2-oxoglutarate = 3-phosphooxypyruvate + L-glutamate. The enzyme catalyses 4-(phosphooxy)-L-threonine + 2-oxoglutarate = (R)-3-hydroxy-2-oxo-4-phosphooxybutanoate + L-glutamate. Its pathway is amino-acid biosynthesis; L-serine biosynthesis; L-serine from 3-phospho-D-glycerate: step 2/3. It participates in cofactor biosynthesis; pyridoxine 5'-phosphate biosynthesis; pyridoxine 5'-phosphate from D-erythrose 4-phosphate: step 3/5. Its function is as follows. Catalyzes the reversible conversion of 3-phosphohydroxypyruvate to phosphoserine and of 3-hydroxy-2-oxo-4-phosphonooxybutanoate to phosphohydroxythreonine. This Corynebacterium glutamicum (strain R) protein is Phosphoserine aminotransferase.